A 147-amino-acid polypeptide reads, in one-letter code: Large ribosomal subunit protein uL16 (147 aa).

This sequence belongs to the universal ribosomal protein uL16 family. Part of the 50S ribosomal subunit.

Binds 23S rRNA and is also seen to make contacts with the A and possibly P site tRNAs. The protein is Large ribosomal subunit protein uL16 of Caldicellulosiruptor bescii (strain ATCC BAA-1888 / DSM 6725 / KCTC 15123 / Z-1320) (Anaerocellum thermophilum).